The primary structure comprises 106 residues: Ribosomal processing cysteine protease Prp (106 aa).

The active-site Proton donor is the His-22. The active-site Nucleophile is the Cys-34.

Belongs to the Prp family. In terms of assembly, homodimer. A mutant protein unable to cleave bL27 copurifies with its substrate.

With respect to regulation, not inhibited by short peptide analogs; a 6-mer inhibits only 20% while a 13-mer inhibits 63%. Inhibited by Ac-KLNLQFF-CH(2) which binds covalantly to Cys-34. Inhibited by mersalyl acid (C13H18HgNO6). An essential cysteine protease that cleaves the N-terminal 9 amino acids from ribosomal protein bL27. Also acts as an N-terminal protease on the major capsid and scaffold assembly proteins of bacteriophage 80alpha. Cleavage of the N-terminus of bL27 (and thus this enzyme) is essential for growth; it cannot be replaced by a 'pre-cleaved' or non-cleavable form of bL27. Might serve a chaperone function during ribosome assembly. This chain is Ribosomal processing cysteine protease Prp, found in Staphylococcus aureus (strain NCTC 8325 / PS 47).